A 274-amino-acid polypeptide reads, in one-letter code: Octanoyltransferase LipM (274 aa).

Residues 31-245 (GEVPPTLRLY…GFAEALGARL (215 aa)) enclose the BPL/LPL catalytic domain. Cysteine 147 serves as the catalytic Acyl-thioester intermediate.

It belongs to the octanoyltransferase LipM family. In terms of assembly, monomer.

It catalyses the reaction octanoyl-[ACP] + L-lysyl-[protein] = N(6)-octanoyl-L-lysyl-[protein] + holo-[ACP] + H(+). It functions in the pathway protein modification; protein lipoylation via endogenous pathway; protein N(6)-(lipoyl)lysine from octanoyl-[acyl-carrier-protein]. Catalyzes the transfer of endogenously produced octanoic acid from octanoyl-acyl-carrier-protein onto the lipoyl domain of GcvH, an intermediate carrier during protein lipoylation. The sequence is that of Octanoyltransferase LipM from Kyrpidia tusciae (strain DSM 2912 / NBRC 15312 / T2) (Bacillus tusciae).